Reading from the N-terminus, the 124-residue chain is Fluoride-specific ion channel FluC (124 aa).

Transmembrane regions (helical) follow at residues 3 to 23, 34 to 54, 68 to 88, and 100 to 120; these read VLLI…VSNL, IGTL…FIFI, LLLI…IETF, and ALNV…GVLI. The Na(+) site is built by G75 and T78.

It belongs to the fluoride channel Fluc/FEX (TC 1.A.43) family.

Its subcellular location is the cell inner membrane. It carries out the reaction fluoride(in) = fluoride(out). Na(+) is not transported, but it plays an essential structural role and its presence is essential for fluoride channel function. Its function is as follows. Fluoride-specific ion channel. Important for reducing fluoride concentration in the cell, thus reducing its toxicity. This is Fluoride-specific ion channel FluC from Coxiella burnetii (strain Dugway 5J108-111).